The chain runs to 230 residues: Sugar fermentation stimulation protein homolog (230 aa).

It belongs to the SfsA family.

The sequence is that of Sugar fermentation stimulation protein homolog from Ruegeria pomeroyi (strain ATCC 700808 / DSM 15171 / DSS-3) (Silicibacter pomeroyi).